The chain runs to 218 residues: MRVKAKIFIRPLFATYVSVIDLSLWEPRTELGRMVKEGKIRTIDEIFANNYIIKEPEIVDILLPGLKQELLNVNLVQRQTHAGERNQFQAVVAVGNEDGYVGVGIGKARQVRQAIEKATREAKLNLVPVRRGCGSWKCSCDEPHSVPFVVRGKSGSVEITLIPAPKGVGLVAGDVAKAVLRLAGIKDVWTKTRGDTRTTLNFAMAVYNALRNTYYFKI.

In terms of domain architecture, S5 DRBM spans Leu-66 to Val-129.

It belongs to the universal ribosomal protein uS5 family. Part of the 30S ribosomal subunit. Contacts protein S4.

Its function is as follows. With S4 and S12 plays an important role in translational accuracy. This chain is Small ribosomal subunit protein uS5, found in Pyrobaculum aerophilum (strain ATCC 51768 / DSM 7523 / JCM 9630 / CIP 104966 / NBRC 100827 / IM2).